The sequence spans 542 residues: Chaperonin GroEL (542 aa).

ATP contacts are provided by residues 29 to 32, 86 to 90, Gly-413, 476 to 478, and Asp-492; these read TLGP, DGTTT, and NAA.

This sequence belongs to the chaperonin (HSP60) family. As to quaternary structure, forms a cylinder of 14 subunits composed of two heptameric rings stacked back-to-back. Interacts with the co-chaperonin GroES.

Its subcellular location is the cytoplasm. The enzyme catalyses ATP + H2O + a folded polypeptide = ADP + phosphate + an unfolded polypeptide.. Its function is as follows. Together with its co-chaperonin GroES, plays an essential role in assisting protein folding. The GroEL-GroES system forms a nano-cage that allows encapsulation of the non-native substrate proteins and provides a physical environment optimized to promote and accelerate protein folding. The chain is Chaperonin GroEL from Lactococcus lactis subsp. lactis (strain IL1403) (Streptococcus lactis).